A 102-amino-acid polypeptide reads, in one-letter code: Large ribosomal subunit protein bL21 (102 aa).

It belongs to the bacterial ribosomal protein bL21 family. As to quaternary structure, part of the 50S ribosomal subunit. Contacts protein L20.

Its function is as follows. This protein binds to 23S rRNA in the presence of protein L20. This is Large ribosomal subunit protein bL21 from Lachnoclostridium phytofermentans (strain ATCC 700394 / DSM 18823 / ISDg) (Clostridium phytofermentans).